Consider the following 162-residue polypeptide: AP-1 complex subunit sigma-2 (162 aa).

This sequence belongs to the adaptor complexes small subunit family. In terms of assembly, adaptor protein complex 1 (AP-1) is a heterotetramer composed of two large adaptins (gamma-type subunit and beta-type subunit), a medium adaptin (mu-type subunit) and a small adaptin (sigma-type subunit). In terms of tissue distribution, expressed in roots, stems, leaves, flowers and siliques (developing fruits and seeds).

Its subcellular location is the golgi apparatus. The protein localises to the cytoplasmic vesicle. It localises to the clathrin-coated vesicle membrane. Functionally, subunit of clathrin-associated adaptor protein complex 1 that plays a role in protein sorting at the trans-Golgi network and early endosomes (TGN/EE). The AP complexes mediate the recruitment of clathrin to membranes and the recognition of sorting signals within the cytosolic tails of transmembrane cargo molecules. This chain is AP-1 complex subunit sigma-2 (AAP19-2), found in Arabidopsis thaliana (Mouse-ear cress).